The chain runs to 122 residues: uncharacterized protein (122 aa).

It belongs to the IIV-6 115R family.

This is an uncharacterized protein from Acheta domesticus (House cricket).